The primary structure comprises 317 residues: tRNA(Ile)-lysidine synthase (317 aa).

An ATP-binding site is contributed by serine 30 to serine 35.

This sequence belongs to the tRNA(Ile)-lysidine synthase family.

The protein localises to the cytoplasm. It catalyses the reaction cytidine(34) in tRNA(Ile2) + L-lysine + ATP = lysidine(34) in tRNA(Ile2) + AMP + diphosphate + H(+). In terms of biological role, ligates lysine onto the cytidine present at position 34 of the AUA codon-specific tRNA(Ile) that contains the anticodon CAU, in an ATP-dependent manner. Cytidine is converted to lysidine, thus changing the amino acid specificity of the tRNA from methionine to isoleucine. The polypeptide is tRNA(Ile)-lysidine synthase (Chlamydia abortus (strain DSM 27085 / S26/3) (Chlamydophila abortus)).